Consider the following 553-residue polypeptide: Chaperonin GroEL 1 (553 aa).

ATP is bound by residues T29–P32, D86–T90, G413, N476–L478, and D492. The disordered stretch occupies residues K521–G542. Over residues D533–G542 the composition is skewed to gly residues.

Belongs to the chaperonin (HSP60) family. As to quaternary structure, forms a cylinder of 14 subunits composed of two heptameric rings stacked back-to-back. Interacts with the co-chaperonin GroES.

It is found in the cytoplasm. The catalysed reaction is ATP + H2O + a folded polypeptide = ADP + phosphate + an unfolded polypeptide.. Its function is as follows. Together with its co-chaperonin GroES, plays an essential role in assisting protein folding. The GroEL-GroES system forms a nano-cage that allows encapsulation of the non-native substrate proteins and provides a physical environment optimized to promote and accelerate protein folding. This is Chaperonin GroEL 1 from Synechococcus sp. (strain WH7803).